Reading from the N-terminus, the 277-residue chain is 14-3-3 protein (277 aa).

The interval 252-277 (LQTQEQQQQPVGEGAEAPKVEATEQQ) is disordered. The segment covering 267–277 (EAPKVEATEQQ) has biased composition (basic and acidic residues).

Belongs to the 14-3-3 family.

This Eimeria tenella (Coccidian parasite) protein is 14-3-3 protein.